Reading from the N-terminus, the 497-residue chain is Thiamine transporter 1 (497 aa).

Methionine 1 carries the post-translational modification N-acetylmethionine. Residues 1–28 (MDVPGPVSRRAAAAAATVLLRTARVRRE) are Cytoplasmic-facing. Residues 29–46 (CWFLPTALLCAYGFFASL) form a helical membrane-spanning segment. The Extracellular segment spans residues 47-72 (RPSEPFLTPYLLGPDKNLTEREVFNE). N-linked (GlcNAc...) asparagine glycosylation is present at asparagine 63. A helical membrane pass occupies residues 73 to 91 (IYPVWTYSYLVLLFPVFLA). Residues 92–99 (TDYLRYKP) are Cytoplasmic-facing. A helical membrane pass occupies residues 100 to 118 (VVLLQGLSLIVTWFMLLYA). Over 119 to 128 (QGLLAIQFLE) the chain is Extracellular. The chain crosses the membrane as a helical span at residues 129-149 (FFYGIATATEIAYYSYIYSVV). Residues 150–165 (DLGMYQKVTSYCRSAT) are Cytoplasmic-facing. Residues 166-185 (LVGFTVGSVLGQILVSVAGW) traverse the membrane as a helical segment. Residues 186 to 191 (SLFSLN) lie on the Extracellular side of the membrane. The helical transmembrane segment at 192–208 (VISLTCVSVAFAVAWFL) threads the bilayer. Residues 209 to 285 (PMPQKSLFFH…LLVLKVLWND (77 aa)) lie on the Cytoplasmic side of the membrane. Serine 222 carries the post-translational modification Phosphoserine. A helical membrane pass occupies residues 286-310 (FLMCYSSRPLLCWSVWWALSTCGYF). Topologically, residues 311–337 (QVVNYTQGLWEKVMPSRYAAIYNGGVE) are extracellular. A glycan (N-linked (GlcNAc...) asparagine) is linked at asparagine 314. A helical transmembrane segment spans residues 338–354 (AVSTLLGAVAVFAVGYI). Residues 355 to 363 (KISWSTWGE) lie on the Cytoplasmic side of the membrane. The helical transmembrane segment at 364-380 (MTLSLFSLLIAAAVYIM) threads the bilayer. Over 381-386 (DTVGNI) the chain is Extracellular. The helical transmembrane segment at 387–409 (WVCYASYVVFRIIYMLLITIATF) threads the bilayer. Residues 410–419 (QIAANLSMER) lie on the Cytoplasmic side of the membrane. A helical membrane pass occupies residues 420–443 (YALVFGVNTFIALALQTLLTLIVV). Over 444-455 (DASGLGLEITTQ) the chain is Extracellular. The chain crosses the membrane as a helical span at residues 456–479 (FLIYASYFALIAVVFLASGAVSVM). Topologically, residues 480–497 (KKCRKLEDPQSSSQVTTS) are cytoplasmic.

It belongs to the reduced folate carrier (RFC) transporter (TC 2.A.48) family. As to quaternary structure, interacts with TSPAN1; this interaction increases the stability of SLC19A2. Interacts with TMEM63B. In terms of tissue distribution, ubiquitous; most abundant in skeletal and cardiac muscle. Medium expression in placenta, heart, liver and kidney, low in lung.

It localises to the cell membrane. It carries out the reaction thiamine(out) + H(+)(in) = thiamine(in) + H(+)(out). It catalyses the reaction pyridoxine(out) + n H(+)(out) = pyridoxine(in) + n H(+)(in). With respect to regulation, pyridoxine transport is inhibited by carbonyl cyanide p-trifluoromethoxyphenylhydrazone (FCCP) and carbonyl cyanide m-chlorophenylhydrazone (CCCP). High-affinity transporter for the intake of thiamine. Mediates H(+)-dependent pyridoxine transport. The protein is Thiamine transporter 1 (SLC19A2) of Homo sapiens (Human).